The sequence spans 111 residues: BET1-like protein (111 aa).

Over 1 to 86 (MADWARAQSP…MARSGRDNRK (86 aa)) the chain is Cytoplasmic. Residues Ser-9 and Ser-37 each carry the phosphoserine modification. One can recognise a t-SNARE coiled-coil homology domain in the interval 15-77 (EILDRENKRM…TGSVKRFSTM (63 aa)). The chain crosses the membrane as a helical; Anchor for type IV membrane protein span at residues 87-107 (LLCGVAVGLIVAFFILSYLLS). At 108 to 111 (RART) the chain is on the lumenal side.

Component of a SNARE complex consisting of STX5, YKT6, GOSR1 and BET1L. Interacts with STX5.

Its subcellular location is the golgi apparatus membrane. It is found in the golgi apparatus. The protein resides in the trans-Golgi network membrane. Its function is as follows. Vesicle SNARE required for targeting and fusion of retrograde transport vesicles with the Golgi complex. Required for the integrity of the Golgi complex. The protein is BET1-like protein of Bos taurus (Bovine).